The chain runs to 431 residues: Levansucrase Lscbeta (431 aa).

Residues tryptophan 61, aspartate 62, alanine 148, arginine 218, and aspartate 219 each contribute to the sucrose site. Aspartate 62 functions as the Nucleophile in the catalytic mechanism. Glutamate 303 serves as the catalytic Proton donor/acceptor.

This sequence belongs to the glycosyl hydrolase 68 family. Homodimer.

The catalysed reaction is [6)-beta-D-fructofuranosyl-(2-&gt;](n) alpha-D-glucopyranoside + sucrose = [6)-beta-D-fructofuranosyl-(2-&gt;](n+1) alpha-D-glucopyranoside + D-glucose. With respect to regulation, sucrose hydrolase activity is negatively affected by salt concentration. The levan polymerization rate is constant regardless of sucrose concentration. In terms of biological role, catalyzes the synthesis of levan, a fructose polymer, by transferring the fructosyl moiety from sucrose to a growing acceptor molecule. Also displays sucrose hydrolase activity. The protein is Levansucrase Lscbeta of Pseudomonas syringae pv. actinidiae.